We begin with the raw amino-acid sequence, 395 residues long: Pyridinium-3,5-bisthiocarboxylic acid mononucleotide nickel insertion protein (395 aa).

The protein belongs to the LarC family.

The catalysed reaction is Ni(II)-pyridinium-3,5-bisthiocarboxylate mononucleotide = pyridinium-3,5-bisthiocarboxylate mononucleotide + Ni(2+). In terms of biological role, involved in the biosynthesis of a nickel-pincer cofactor ((SCS)Ni(II) pincer complex). Binds Ni(2+), and functions in nickel delivery to pyridinium-3,5-bisthiocarboxylic acid mononucleotide (P2TMN), to form the mature cofactor. Is thus probably required for the activation of nickel-pincer cofactor-dependent enzymes. The polypeptide is Pyridinium-3,5-bisthiocarboxylic acid mononucleotide nickel insertion protein (Staphylococcus epidermidis (strain ATCC 12228 / FDA PCI 1200)).